The chain runs to 21 residues: Nitrilase (21 aa).

Belongs to the carbon-nitrogen hydrolase superfamily. Nitrilase family.

The enzyme catalyses a nitrile + 2 H2O = a carboxylate + NH4(+). In terms of biological role, acts on many kinds of nitrile compounds such as aliphatic, aromatic, and heterocyclic mononitriles or dinitriles. Prefers S-(-)-2-(4'-isobutylphenyl)-propionitrile to R-(+)-2-(4'-isobutylphenyl)-propionitrile as the substrate. The protein is Nitrilase of Acinetobacter sp. (strain AK226).